Here is a 452-residue protein sequence, read N- to C-terminus: Probable phosphoglucosamine mutase (452 aa).

Serine 96 serves as the catalytic Phosphoserine intermediate. Residues serine 96, aspartate 235, aspartate 237, and aspartate 239 each contribute to the Mg(2+) site. Serine 96 carries the post-translational modification Phosphoserine.

This sequence belongs to the phosphohexose mutase family. Mg(2+) is required as a cofactor. In terms of processing, activated by phosphorylation.

It carries out the reaction alpha-D-glucosamine 1-phosphate = D-glucosamine 6-phosphate. Catalyzes the conversion of glucosamine-6-phosphate to glucosamine-1-phosphate. This Methanopyrus kandleri (strain AV19 / DSM 6324 / JCM 9639 / NBRC 100938) protein is Probable phosphoglucosamine mutase.